Here is a 689-residue protein sequence, read N- to C-terminus: Glycine--tRNA ligase beta subunit (689 aa).

It belongs to the class-II aminoacyl-tRNA synthetase family. As to quaternary structure, tetramer of two alpha and two beta subunits.

The protein resides in the cytoplasm. The catalysed reaction is tRNA(Gly) + glycine + ATP = glycyl-tRNA(Gly) + AMP + diphosphate. This Shewanella amazonensis (strain ATCC BAA-1098 / SB2B) protein is Glycine--tRNA ligase beta subunit.